A 686-amino-acid polypeptide reads, in one-letter code: AsmA family protein YhjG (686 aa).

Residues 1–6 (MSKAGK) are Cytoplasmic-facing. A helical membrane pass occupies residues 7–27 (ITAAISGAFLLLIVVAIILIA). The Periplasmic portion of the chain corresponds to 28 to 686 (TFDWNRLKPT…CRTILSQMKK (659 aa)). Residues 372-396 (VDSGKGAEKSKRSEQKKGEKSVQPA) form a disordered region. Positions 376–391 (KGAEKSKRSEQKKGEK) are enriched in basic and acidic residues.

This sequence belongs to the AsmA family.

The protein resides in the cell inner membrane. In Escherichia coli (strain K12), this protein is AsmA family protein YhjG (yhjG).